The chain runs to 225 residues: Shikimate kinase (225 aa).

27–32 (GAGKTT) contacts ATP. Position 31 (Thr31) interacts with Mg(2+). Positions 49, 73, and 95 each coordinate substrate. Arg132 provides a ligand contact to ATP. Residue Arg150 coordinates substrate. The segment at 186 to 225 (GGSEPDEAADAAGGSEPDEAADAAGGSEPDEAADAAGGKR) is disordered.

It belongs to the shikimate kinase family. In terms of assembly, monomer. The cofactor is Mg(2+).

It localises to the cytoplasm. It catalyses the reaction shikimate + ATP = 3-phosphoshikimate + ADP + H(+). The protein operates within metabolic intermediate biosynthesis; chorismate biosynthesis; chorismate from D-erythrose 4-phosphate and phosphoenolpyruvate: step 5/7. Functionally, catalyzes the specific phosphorylation of the 3-hydroxyl group of shikimic acid using ATP as a cosubstrate. In Frankia casuarinae (strain DSM 45818 / CECT 9043 / HFP020203 / CcI3), this protein is Shikimate kinase.